Consider the following 317-residue polypeptide: Olfactory receptor 6Q1 (317 aa).

Over 1-27 the chain is Extracellular; that stretch reads MQPYTKNWTQVTEFVMMGFAGIHEAHL. Asn-7 is a glycosylation site (N-linked (GlcNAc...) asparagine). The chain crosses the membrane as a helical span at residues 28–48; it reads LFFILFLTMYLFTLVENLAII. Topologically, residues 49-56 are cytoplasmic; the sequence is LVVGLDHR. The helical transmembrane segment at 57 to 77 threads the bilayer; that stretch reads LRRPMYFFLTHLSCLEIWYTS. Over 78–103 the chain is Extracellular; it reads VTVPKMLAGFIGVDGGKNISYADCLS. An N-linked (GlcNAc...) asparagine glycan is attached at Asn-95. Residues Cys-101 and Cys-193 are joined by a disulfide bond. The helical transmembrane segment at 104–124 threads the bilayer; it reads QLFIFTFLGATECFLLAAMAY. Topologically, residues 125–143 are cytoplasmic; that stretch reads DRYVAICMPLHYGAFVSWG. A helical transmembrane segment spans residues 144-164; the sequence is TCIRLAAACWLVGFLTPILPI. Residues 165-201 are Extracellular-facing; the sequence is YLLSQLTFYGPNVIDHFSCDASPLLALSCSDVTWKET. Residues 202-221 form a helical membrane-spanning segment; that stretch reads VDFLVSLAVLLASSMVIAVS. Topologically, residues 222–241 are cytoplasmic; it reads YGNIVWTLLHIRSAAERWKA. The helical transmembrane segment at 242 to 262 threads the bilayer; the sequence is FSTCAAHLTVVSLFYGTLFFM. Residues 263-275 lie on the Extracellular side of the membrane; it reads YVQTKVTSSINFN. The chain crosses the membrane as a helical span at residues 276 to 296; sequence KVVSVFYSVVTPMLNPLIYSL. The Cytoplasmic segment spans residues 297–317; sequence RNKEVKGALGRVFSLNFWKGQ.

It belongs to the G-protein coupled receptor 1 family.

The protein localises to the cell membrane. In terms of biological role, odorant receptor. This Homo sapiens (Human) protein is Olfactory receptor 6Q1 (OR6Q1).